A 196-amino-acid chain; its full sequence is C-type lectin domain family 3 member A (196 aa).

A signal peptide spans 1–22; that stretch reads MAKNGLVLCILVVSLLLDQTDG. 3 cysteine pairs are disulfide-bonded: C68–C78, C95–C191, and C167–C183. Residues 74–192 form the C-type lectin domain; sequence VHKKCYLASE…CRSSKRYICE (119 aa).

The protein resides in the secreted. Its function is as follows. Promotes cell adhesion to laminin and fibronectin. The protein is C-type lectin domain family 3 member A (Clec3a) of Mus musculus (Mouse).